We begin with the raw amino-acid sequence, 749 residues long: Patatin-like phospholipase domain-containing protein AN0408 (749 aa).

Residues 1–11 (MEKSAAGDNID) show a composition bias toward basic and acidic residues. The segment at 1 to 21 (MEKSAAGDNIDKYSPSSIPDY) is disordered. A helical membrane pass occupies residues 92 to 112 (WPFLLFVLGWITFLSVGYALT). The PNPLA domain occupies 280–471 (LCLSGGATFA…RTDIPIKALN (192 aa)). Positions 311-315 (GTSGG) match the GXSXG motif. Ser313 serves as the catalytic Nucleophile. Asp458 functions as the Proton acceptor in the catalytic mechanism. Residues 630 to 659 (SIQPFPFDNGAAGADQKSNDPREERLNRNF) form a disordered region. A compositionally biased stretch (basic and acidic residues) spans 646–659 (KSNDPREERLNRNF).

Belongs to the PLPL family.

It is found in the membrane. Its function is as follows. Probable lipid hydrolase. The protein is Patatin-like phospholipase domain-containing protein AN0408 of Emericella nidulans (strain FGSC A4 / ATCC 38163 / CBS 112.46 / NRRL 194 / M139) (Aspergillus nidulans).